A 714-amino-acid polypeptide reads, in one-letter code: BBSome complex member bbs-2 (714 aa).

2 coiled-coil regions span residues 332 to 361 (IREFGQKKHNLMMELSNYEQEEQLADVEKD) and 597 to 627 (MTEVRDRLTAELQERQAAVKEIIIRAEDSIA).

As to quaternary structure, part of BBSome complex, that contains at least bbs-1, bbs-2, bbs-4, bbs-5, osm-12, bbs-8/ttc-8 and bbs-9. In terms of tissue distribution, expressed in ciliated cells including amphid and both inner and outer labial neurons of the head and in both phasmid neurons PHA and PHB in the tail at larval stages L1 and L2.

The protein localises to the cell projection. It is found in the cilium. The protein resides in the cytoplasm. Its subcellular location is the cytoskeleton. It localises to the cilium basal body. The protein localises to the cilium axoneme. Functionally, component of the BBSome complex. The BBSome complex is thought to function as a coat complex required for sorting of specific membrane proteins to the primary cilia. The BBSome complex is required for ciliogenesis but is dispensable for centriolar satellite function. Required for proper BBSome complex assembly and its ciliary localization. Required for cilia biogenesis and both the assembly and movement of intraflagellar transport proteins along the ciliary axoneme. The polypeptide is BBSome complex member bbs-2 (Caenorhabditis elegans).